The following is a 1071-amino-acid chain: Carbamoyl phosphate synthase large chain (1071 aa).

A carboxyphosphate synthetic domain region spans residues 1–403; sequence MPKRTDLKSI…SFQKALRGLE (403 aa). In terms of domain architecture, ATP-grasp 1 spans 133 to 328; it reads KEAMEKIGLS…IAKVAANWAV (196 aa). ATP is bound by residues R169, G175, G176, Q208, V210, E215, G241, V242, H243, Q285, and E299. Positions 285, 299, and 301 each coordinate Mg(2+). Mn(2+)-binding residues include Q285, E299, and N301. The tract at residues 404 to 548 is oligomerization domain; the sequence is TGLCGFNPAR…YSTYEEECES (145 aa). The interval 549–930 is carbamoyl phosphate synthetic domain; it reads RPSDRKKVMI…AYYKAQLGAG (382 aa). An ATP-grasp 2 domain is found at 673–864; the sequence is QKVLNDLGLR…LAKVGARCMA (192 aa). R709, F748, L750, E755, G780, I781, H782, S783, Q823, and E835 together coordinate ATP. Positions 823, 835, and 837 each coordinate Mg(2+). 3 residues coordinate Mn(2+): Q823, E835, and N837. The 141-residue stretch at 931–1071 folds into the MGS-like domain; the sequence is ERLNPTGKIF…ELHGRLKNRN (141 aa). Positions 931-1071 are allosteric domain; sequence ERLNPTGKIF…ELHGRLKNRN (141 aa).

The protein belongs to the CarB family. As to quaternary structure, composed of two chains; the small (or glutamine) chain promotes the hydrolysis of glutamine to ammonia, which is used by the large (or ammonia) chain to synthesize carbamoyl phosphate. Tetramer of heterodimers (alpha,beta)4. Mg(2+) serves as cofactor. It depends on Mn(2+) as a cofactor.

It catalyses the reaction hydrogencarbonate + L-glutamine + 2 ATP + H2O = carbamoyl phosphate + L-glutamate + 2 ADP + phosphate + 2 H(+). The enzyme catalyses hydrogencarbonate + NH4(+) + 2 ATP = carbamoyl phosphate + 2 ADP + phosphate + 2 H(+). The protein operates within amino-acid biosynthesis; L-arginine biosynthesis; carbamoyl phosphate from bicarbonate: step 1/1. Its pathway is pyrimidine metabolism; UMP biosynthesis via de novo pathway; (S)-dihydroorotate from bicarbonate: step 1/3. Functionally, large subunit of the glutamine-dependent carbamoyl phosphate synthetase (CPSase). CPSase catalyzes the formation of carbamoyl phosphate from the ammonia moiety of glutamine, carbonate, and phosphate donated by ATP, constituting the first step of 2 biosynthetic pathways, one leading to arginine and/or urea and the other to pyrimidine nucleotides. The large subunit (synthetase) binds the substrates ammonia (free or transferred from glutamine from the small subunit), hydrogencarbonate and ATP and carries out an ATP-coupled ligase reaction, activating hydrogencarbonate by forming carboxy phosphate which reacts with ammonia to form carbamoyl phosphate. The protein is Carbamoyl phosphate synthase large chain of Neisseria gonorrhoeae.